We begin with the raw amino-acid sequence, 356 residues long: MANIDINKLKAIENAMGQIEKQFGKGSVMKLGEDSVLNIDAISTGCLDLDIALGIGGVPKGRIVEIYGPESSGKTTIALHIAAEAQKKGGAVGFIDAEHALDPSYARNLGVDTENLIVSQPDTGEQGLEIAEALVRSGAIDVIIVDSVAALVPKAEIEGEMGDSHIGLQARLMSQALRKLAGTISKTNCIAIFINQLREKVGVMFGSPETTTGGRALKFYASVRLDVRRIDSIKQGDGIVGNRTRIKVTKNKVAPPFKQAEFDIMYNEGISREGNIVDVGVKEEIVQKSGAWFSYGDIRLGQGRENAKQYLKENPEVALDIENQIREKHNLPLMDAVIKETSQEVKGKENKEQSDK.

Residue glycine 68–threonine 75 coordinates ATP.

Belongs to the RecA family.

It is found in the cytoplasm. Its function is as follows. Can catalyze the hydrolysis of ATP in the presence of single-stranded DNA, the ATP-dependent uptake of single-stranded DNA by duplex DNA, and the ATP-dependent hybridization of homologous single-stranded DNAs. It interacts with LexA causing its activation and leading to its autocatalytic cleavage. The sequence is that of Protein RecA from Clostridium botulinum (strain Alaska E43 / Type E3).